The sequence spans 158 residues: Eukaryotic translation initiation factor 5A-3 (158 aa).

The segment covering 1–10 (MSDDEHHFES) has biased composition (basic and acidic residues). A disordered region spans residues 1 to 23 (MSDDEHHFESSDAGASKTYPQQA). Residue Ser-2 is modified to Phosphoserine. A Hypusine modification is found at Lys-51.

The protein belongs to the eIF-5A family. Lys-52 undergoes hypusination, a unique post-translational modification that consists in the addition of a butylamino group from spermidine to lysine side chain, leading to the formation of the unusual amino acid hypusine. eIF-5As are the only known proteins to undergo this modification, which is essential for their function. In terms of tissue distribution, expressed in the vascular tissues of roots, stems and leaves. Localized in phloem companion cells rather than sieve-tube members. Not expressed in xylem or procambium. Detected in root tips and in the chalazal tissue of fertilized ovules.

Its function is as follows. Translation factor that promotes translation elongation and termination, particularly upon ribosome stalling at specific amino acid sequence contexts. Binds between the exit (E) and peptidyl (P) site of the ribosome and promotes rescue of stalled ribosome: specifically required for efficient translation of polyproline-containing peptides as well as other motifs that stall the ribosome. Acts as a ribosome quality control (RQC) cofactor by joining the RQC complex to facilitate peptidyl transfer during CAT tailing step. Involved in supporting growth and plays a regulatory role in the response to sub-lethal osmotic and nutrient stress. This Arabidopsis thaliana (Mouse-ear cress) protein is Eukaryotic translation initiation factor 5A-3 (ELF5A-3).